Reading from the N-terminus, the 77-residue chain is Large ribosomal subunit protein bL28 (77 aa).

Belongs to the bacterial ribosomal protein bL28 family.

This is Large ribosomal subunit protein bL28 from Delftia acidovorans (strain DSM 14801 / SPH-1).